The sequence spans 161 residues: Large ribosomal subunit protein uL30m (161 aa).

The transit peptide at 1–34 (MAGILRLVVQWPPGRLQTVTKGVESLICTDWIRH) directs the protein to the mitochondrion.

The protein belongs to the universal ribosomal protein uL30 family. Component of the mitochondrial large ribosomal subunit (mt-LSU). Mature mammalian 55S mitochondrial ribosomes consist of a small (28S) and a large (39S) subunit. The 28S small subunit contains a 12S ribosomal RNA (12S mt-rRNA) and 30 different proteins. The 39S large subunit contains a 16S rRNA (16S mt-rRNA), a copy of mitochondrial valine transfer RNA (mt-tRNA(Val)), which plays an integral structural role, and 52 different proteins.

Its subcellular location is the mitochondrion. The polypeptide is Large ribosomal subunit protein uL30m (MRPL30) (Homo sapiens (Human)).